The primary structure comprises 846 residues: Iron-sulfur cluster assembly SufBD family protein Mb1496 (846 aa).

Positions 1-20 (MTLTPEASKSVAQPPTQAPL) are disordered. Positions 388 to 528 (LAGYYLAEGH…LQSILARLGH (141 aa)) constitute a DOD-type homing endonuclease domain.

Belongs to the iron-sulfur cluster assembly SufBD family. This protein undergoes a protein self splicing that involves a post-translational excision of the intervening region (intein) followed by peptide ligation.

The chain is Iron-sulfur cluster assembly SufBD family protein Mb1496 from Mycobacterium bovis (strain ATCC BAA-935 / AF2122/97).